The following is a 678-amino-acid chain: DNA ligase (678 aa).

NAD(+)-binding positions include 47-51, 96-97, and glutamate 122; these read DSDYD and SL. The active-site N6-AMP-lysine intermediate is lysine 124. NAD(+) is bound by residues arginine 145, glutamate 182, lysine 300, and lysine 324. Zn(2+)-binding residues include cysteine 418, cysteine 421, cysteine 436, and cysteine 442. The 77-residue stretch at 602–678 folds into the BRCT domain; the sequence is AYNESFTGKT…ILEDNLKDLL (77 aa).

Belongs to the NAD-dependent DNA ligase family. LigA subfamily. Mg(2+) serves as cofactor. It depends on Mn(2+) as a cofactor.

It catalyses the reaction NAD(+) + (deoxyribonucleotide)n-3'-hydroxyl + 5'-phospho-(deoxyribonucleotide)m = (deoxyribonucleotide)n+m + AMP + beta-nicotinamide D-nucleotide.. Its function is as follows. DNA ligase that catalyzes the formation of phosphodiester linkages between 5'-phosphoryl and 3'-hydroxyl groups in double-stranded DNA using NAD as a coenzyme and as the energy source for the reaction. It is essential for DNA replication and repair of damaged DNA. The protein is DNA ligase of Francisella tularensis subsp. novicida (strain U112).